The primary structure comprises 238 residues: N-methyltransferase vrtF (238 aa).

This sequence belongs to the methyltransferase superfamily.

It participates in secondary metabolite biosynthesis; terpenoid biosynthesis. N-methyltransferase; part of the gene cluster that mediates the biosynthesis of viridicatumtoxin, a tetracycline-like fungal meroterpenoid with a unique, fused spirobicyclic ring system. The first step of the pathway is the production of the malonamoyl-CoA starter unit for the polyketide synthase vrtA. The aldolase vrtJ may be involved in the synthesis of the malonamate substrate for malonamoyl-CoA synthetase vrtB. The polyketide synthase vrtA then may utilize the malonamoyl-CoA starter unit, followed by sequential condensation of eight malonyl-CoA units to form the polyketide backbone. The cyclization of the last ring could be mediated by the lactamase-like protein vrtG. The proposed post-PKS tailoring steps are a hydroxylation at C5 catalyzed the cytochrome P450 monooxygenase vrtE, a hydroxylation at C12a catalyzed by VrtH and/or VrtI, and an O-methylation by the O-methyltransferase vrtF. VrtC is then proposed to catalyze the transfer of a geranyl group synthesized by vrtD to the aromatic C ring of the tetracyclic polyketide intermediate of viridicatumtoxin to yield previridicatumtoxin. Finally, the cytochrome P450 monooxygenase vrtK catalyzes the spirocyclization of the geranyl moiety of previridicatumtoxin to afford viridicatumtoxin. In Penicillium aethiopicum, this protein is N-methyltransferase vrtF.